A 224-amino-acid polypeptide reads, in one-letter code: UPF0758 protein Pmen_4376 (224 aa).

The MPN domain maps to 102–224 (ALESPQAVRD…PLSMAELGWM (123 aa)). Positions 173, 175, and 186 each coordinate Zn(2+). A JAMM motif motif is present at residues 173-186 (HNHPSGVCEPSQAD).

The protein belongs to the UPF0758 family.

The polypeptide is UPF0758 protein Pmen_4376 (Ectopseudomonas mendocina (strain ymp) (Pseudomonas mendocina)).